The following is a 549-amino-acid chain: Chaperonin GroEL (549 aa).

ATP contacts are provided by residues 30–33, K51, 87–91, G415, and D496; these read TLGP and DGTTT.

The protein belongs to the chaperonin (HSP60) family. In terms of assembly, forms a cylinder of 14 subunits composed of two heptameric rings stacked back-to-back. Interacts with the co-chaperonin GroES.

It localises to the cytoplasm. It carries out the reaction ATP + H2O + a folded polypeptide = ADP + phosphate + an unfolded polypeptide.. Together with its co-chaperonin GroES, plays an essential role in assisting protein folding. The GroEL-GroES system forms a nano-cage that allows encapsulation of the non-native substrate proteins and provides a physical environment optimized to promote and accelerate protein folding. The sequence is that of Chaperonin GroEL from Acidiphilium cryptum (strain JF-5).